Consider the following 716-residue polypeptide: MGKTKSRGRRAEKKEAEKELLQNAQSLAGENDSKVSQPSNIPNTFFGLVDSTEIEYFKQAESTLNINAFETDEERNGFISSVLEEAQGKELKLVTNQICSKLMERLILFADSSQLKAIFETFSGHFASLAFHKYSSHVLETFLVRAAALIELELTQTDEDYNEGHGEERDKDYNEEQERRQKVQEQSLSEKKSVEEMFLNMVNELKPYLSTMIDHQYASHVLRLLILILAGKELPSTTTSNSTLRSKKSKIARKMIEIKDNEDFDRAYQTPPSFKNELREYIQIITKDLDTKRARELSIHKVASPVLQLIIRVEGLVDRERTLWHLVFAKQSEEKVPEEESFVEYLLSDSVGSHFFEGIIKNDGARPQYIERLYKLYMKDRVLKLARRATTGVYIIQALMFKLKPVEVEYILDIIIPELANLISIADNQNLDLARRIVDASIIRGNYRRDDIIQQLFLKFAPNYDLSNPQSSTSTEFLENALQLTGSTLGNTRDDWPTAEERRRALFLEKLMELDYRFIICAWLNFMALPVERFVQMCMHGVFSHVVENALVVEKDEPKNVQILRKRFLNIFQGNIVTLACNSYGSHIVDKLWNFTVFLPMYKDRVALELMGEATKVKDSNYGKLVWKNWGMELFARKKYDWKLLIKAQENEFLGVDEDTERPLKPIELKMNNLARERKEQQERAEQAQMGYNKRKLDELTGNGEKRQKVRGRRRE.

Basic residues predominate over residues 1–11; it reads MGKTKSRGRRA. The segment at 1-38 is disordered; it reads MGKTKSRGRRAEKKEAEKELLQNAQSLAGENDSKVSQP. Residues 22-38 are compositionally biased toward polar residues; it reads QNAQSLAGENDSKVSQP. 2 Pumilio repeats span residues 85–120 and 121–156; these read EAQG…AIFE and TFSG…ELTQ. A disordered region spans residues 159-188; it reads EDYNEGHGEERDKDYNEEQERRQKVQEQSL. Residues 162–188 are compositionally biased toward basic and acidic residues; it reads NEGHGEERDKDYNEEQERRQKVQEQSL. 6 Pumilio repeats span residues 204–240, 288–325, 338–375, 377–413, 528–565, and 571–608; these read ELKP…TTTS, DLDT…TLWH, EEES…RLYK, YMKD…YILD, ALPV…QILR, and IFQG…RVAL. Composition is skewed to basic and acidic residues over residues 675–686 and 695–707; these read ARERKEQQERAE and RKLD…GEKR. Positions 675–716 are disordered; the sequence is ARERKEQQERAEQAQMGYNKRKLDELTGNGEKRQKVRGRRRE.

This sequence belongs to the NOP9 family.

The protein resides in the nucleus. It is found in the nucleolus. Functionally, RNA-binding nucleolar protein required for pre-rRNA processing. Involved in production of 18S rRNA and assembly of small ribosomal subunit. The chain is Nucleolar protein 9 (NOP9) from Lodderomyces elongisporus (strain ATCC 11503 / CBS 2605 / JCM 1781 / NBRC 1676 / NRRL YB-4239) (Yeast).